A 164-amino-acid polypeptide reads, in one-letter code: UPF0114 protein YqhA (164 aa).

Transmembrane regions (helical) follow at residues 15-35 (LLAP…LKFF), 53-73 (LILV…LVMV), and 136-156 (LMWY…MGYL).

This sequence belongs to the UPF0114 family.

It localises to the cell membrane. This chain is UPF0114 protein YqhA, found in Salmonella dublin (strain CT_02021853).